Reading from the N-terminus, the 405-residue chain is MTKIYSSIAVKKGLFTSFLLFIYVLGSRIILPFVDLNTKDFLGGSTAYLAFSAALTGGNLRSLSIFSVGLSPWMSAMILWQMFSFSKRLGLTSTSIEIQDRRKMYLTLLIAVIQSLAVSLRLPVQSSYSAILVVLMNTILLIAGTFFLVWLSDLNASMGIGGSIVILLSSMVLNIPQDVLETFQTVHIPTGIIVLLALLTLVFSYLLALMYRARYLVPVNKIGLHNRFKRYSYLEIMLNPAGGMPYMYVMSFLSVPAYLFILLGFIFPNHSGLAALSKEFMVGKPLWVYVYISVLFLFSIIFAFVTMNGEEIADRMKKSGEYIYGIYPGADTSRFINRLVLRFSVIGGLFNVIMAGGPMLFVLFDEKLLRLAMIPGLFMMFGGMIFTIRDEVKALRLNETYRPLI.

10 consecutive transmembrane segments (helical) span residues 14–34 (LFTS…LPFV), 65–85 (IFSV…MFSF), 104–124 (MYLT…RLPV), 131–151 (ILVV…LVWL), 156–176 (ASMG…LNIP), 191–211 (GIIV…ALMY), 247–267 (MYVM…GFIF), 285–305 (PLWV…FAFV), 343–363 (FSVI…LFVL), and 368–388 (LLRL…IFTI).

The protein belongs to the SecY/SEC61-alpha family. SecY2 subfamily. In terms of assembly, component of the accessory SecA2/SecY2 protein translocase complex required to export cell wall proteins. May form heterotrimers with SecE and SecG subunits.

The protein localises to the cell membrane. Functionally, part of the accessory SecA2/SecY2 system specifically required for export of possible cell wall proteins. The central subunit of a protein translocation channel. This chain is Accessory Sec system protein translocase subunit SecY2, found in Streptococcus pneumoniae serotype 4 (strain ATCC BAA-334 / TIGR4).